A 298-amino-acid polypeptide reads, in one-letter code: Max-like protein X (298 aa).

Residues 1 to 63 form a disordered region; it reads MTEPGASPED…PRGCREDSSH (63 aa). A Phosphoserine modification is found at serine 7. Basic residues predominate over residues 28-37; that stretch reads GRARARRGAG. 5 positions are modified to phosphoserine: serine 45, serine 48, serine 74, serine 77, and serine 98. A disordered region spans residues 91–145; that stretch reads SVVSRANSIGSTSASSVPNTDDEDSDYHQEAYKESYKDRRRRAHTQAEQKRRDAI. Residues 94-109 are compositionally biased toward polar residues; the sequence is SRANSIGSTSASSVPN. Composition is skewed to basic and acidic residues over residues 116–127 and 135–145; these read DYHQEAYKESYK and TQAEQKRRDAI. Residues 129 to 187 enclose the bHLH domain; that stretch reads RRRRAHTQAEQKRRDAIKRGYDDLQTIVPTCQQQDFSIGSQKLSKAIVLQKTIDYIQFL. Positions 140–160 are leucine-zipper; that stretch reads KRRDAIKRGYDDLQTIVPTCQ.

As to quaternary structure, efficient DNA binding requires dimerization with another bHLH protein. Binds DNA as a heterodimer with MAD1, MAD4, MNT, WBSCR14 and MLXIP. Can also bind DNA as a homodimer. Expressed in all tissues tested, including spleen, thymus, prostate, ovary, intestine, colon, peripheral blood leukocyte, heart, liver, skeletal muscle and kidney. Lower levels of expression in testis, brain, placenta and lung.

Its subcellular location is the cytoplasm. It is found in the nucleus. Functionally, transcription regulator. Forms a sequence-specific DNA-binding protein complex with MAD1, MAD4, MNT, WBSCR14 and MLXIP which recognizes the core sequence 5'-CACGTG-3'. The TCFL4-MAD1, TCFL4-MAD4, TCFL4-WBSCR14 complexes are transcriptional repressors. Plays a role in transcriptional activation of glycolytic target genes. Involved in glucose-responsive gene regulation. The polypeptide is Max-like protein X (MLX) (Homo sapiens (Human)).